Reading from the N-terminus, the 165-residue chain is Protein SprT (165 aa).

One can recognise a SprT-like domain in the interval 10 to 158 (EACYRQAEHF…CRRCKATLVF (149 aa)). H69 serves as a coordination point for Zn(2+). E70 is an active-site residue. A Zn(2+)-binding site is contributed by H73.

Belongs to the SprT family. It depends on Zn(2+) as a cofactor.

It localises to the cytoplasm. In Pseudomonas aeruginosa (strain UCBPP-PA14), this protein is Protein SprT.